The chain runs to 135 residues: Thioredoxin H5 (135 aa).

Residues 13 to 128 form the Thioredoxin domain; the sequence is EHLDYSGGNV…LQEKFEQLNR (116 aa). Residues Cys-54 and Cys-57 each act as nucleophile in the active site. Cysteines 54 and 57 form a disulfide.

The protein belongs to the thioredoxin family. Plant H-type subfamily.

The protein resides in the cytoplasm. Functionally, probable thiol-disulfide oxidoreductase that may be involved in the redox regulation of a number of cytosolic enzymes. This Oryza sativa subsp. japonica (Rice) protein is Thioredoxin H5.